The sequence spans 184 residues: MGVIQTLDSLMTNPMPEGRVEDILRPEGENPLLEKGYVTTSVDALLNWARTGSMWPMTFGLACCAVEMMHAGASRLDLDRYGVVFRPSPRQSDVMIVAGTLVNKMAPALRKVYDQMPDPKWVISMGSCANGGGYYHYSYSVVRGCDRIVPVDIYVPGCPPTAEALVYGILQLQKKIWRTQTIAR.

The [4Fe-4S] cluster site is built by Cys-63, Cys-64, Cys-128, and Cys-158.

Belongs to the complex I 20 kDa subunit family. NDH-1 is composed of 14 different subunits. Subunits NuoB, C, D, E, F, and G constitute the peripheral sector of the complex. It depends on [4Fe-4S] cluster as a cofactor.

Its subcellular location is the cell inner membrane. It carries out the reaction a quinone + NADH + 5 H(+)(in) = a quinol + NAD(+) + 4 H(+)(out). NDH-1 shuttles electrons from NADH, via FMN and iron-sulfur (Fe-S) centers, to quinones in the respiratory chain. The immediate electron acceptor for the enzyme in this species is believed to be ubiquinone. Couples the redox reaction to proton translocation (for every two electrons transferred, four hydrogen ions are translocated across the cytoplasmic membrane), and thus conserves the redox energy in a proton gradient. The sequence is that of NADH-quinone oxidoreductase subunit B from Xanthomonas axonopodis pv. citri (strain 306).